The primary structure comprises 313 residues: Putative S-adenosyl-L-methionine-dependent methyltransferase MAV_4573 (313 aa).

S-adenosyl-L-methionine is bound by residues Asp-129 and 158–159 (DL).

The protein belongs to the UPF0677 family.

Exhibits S-adenosyl-L-methionine-dependent methyltransferase activity. The chain is Putative S-adenosyl-L-methionine-dependent methyltransferase MAV_4573 from Mycobacterium avium (strain 104).